The chain runs to 220 residues: Germin-like protein subfamily 2 member 4 (220 aa).

The signal sequence occupies residues 1 to 21 (MDSRCFGFFFTLLSLNVIVLA). A disulfide bridge connects residues Cys-31 and Cys-46. N-linked (GlcNAc...) asparagine glycosylation is found at Asn-51 and Asn-69. Positions 58–209 (FFAGIGKPAV…TFQIGTKEIE (152 aa)) constitute a Cupin type-1 domain. The Mn(2+) site is built by His-108, His-110, Glu-115, and His-154.

It belongs to the germin family. Oligomer (believed to be a pentamer but probably hexamer).

It is found in the secreted. It localises to the extracellular space. Its subcellular location is the apoplast. Its function is as follows. May play a role in plant defense. Probably has no oxalate oxidase activity even if the active site is conserved. The chain is Germin-like protein subfamily 2 member 4 (GLP10) from Arabidopsis thaliana (Mouse-ear cress).